Consider the following 136-residue polypeptide: Large ribosomal subunit protein uL16 (136 aa).

It belongs to the universal ribosomal protein uL16 family. As to quaternary structure, part of the 50S ribosomal subunit.

Functionally, binds 23S rRNA and is also seen to make contacts with the A and possibly P site tRNAs. The polypeptide is Large ribosomal subunit protein uL16 (Psychromonas ingrahamii (strain DSM 17664 / CCUG 51855 / 37)).